Here is a 607-residue protein sequence, read N- to C-terminus: Arginine--tRNA ligase (607 aa).

The 'HIGH' region signature appears at 147 to 157 (PNIAKEMHVGH).

Belongs to the class-I aminoacyl-tRNA synthetase family. In terms of assembly, monomer.

Its subcellular location is the cytoplasm. It catalyses the reaction tRNA(Arg) + L-arginine + ATP = L-arginyl-tRNA(Arg) + AMP + diphosphate. The protein is Arginine--tRNA ligase of Prochlorococcus marinus (strain NATL1A).